The following is a 439-amino-acid chain: ATP-dependent RNA helicase RhlB (439 aa).

Residues 9 to 37 (QKFADLPLHPEVKQALAENGFEFCTPIQA) carry the Q motif motif. In terms of domain architecture, Helicase ATP-binding spans 40-219 (LPVLLQSKDI…YDHMNDPVKV (180 aa)). ATP is bound at residue 53–60 (AQTGTGKT). The short motif at 165–168 (DEAD) is the DEAD box element. Positions 243–390 (KIRLLLTLIE…VSNYDRDALL (148 aa)) constitute a Helicase C-terminal domain. Residues 395–439 (PPVKIHRKHPAGARNLRERSGAGRPQGAHRSGGRPPRHDRTRRQP) form a disordered region. Basic residues predominate over residues 425 to 439 (SGGRPPRHDRTRRQP).

Belongs to the DEAD box helicase family. RhlB subfamily. In terms of assembly, component of the RNA degradosome, which is a multiprotein complex involved in RNA processing and mRNA degradation.

It is found in the cytoplasm. It catalyses the reaction ATP + H2O = ADP + phosphate + H(+). DEAD-box RNA helicase involved in RNA degradation. Has RNA-dependent ATPase activity and unwinds double-stranded RNA. In Shewanella sp. (strain MR-4), this protein is ATP-dependent RNA helicase RhlB.